A 146-amino-acid polypeptide reads, in one-letter code: uncharacterized protein (146 aa).

The next 5 helical transmembrane spans lie at 5–27, 32–49, 61–80, 90–108, and 120–142; these read GAMVLLTMLILYAAPSFALYGLA, FVYVGAIMIVAFGVYIIL, LAVMLISALTAIFLAYFFSG, SLGLFAVVAAMLLALARVF, and FFLKWILVVAITFTILSVFMLFL.

It localises to the cell membrane. This is an uncharacterized protein from Archaeoglobus fulgidus (strain ATCC 49558 / DSM 4304 / JCM 9628 / NBRC 100126 / VC-16).